A 431-amino-acid polypeptide reads, in one-letter code: uncharacterized protein (431 aa).

This is an uncharacterized protein from Acanthamoeba polyphaga mimivirus (APMV).